Here is a 347-residue protein sequence, read N- to C-terminus: UDP-N-acetylenolpyruvoylglucosamine reductase (347 aa).

In terms of domain architecture, FAD-binding PCMH-type spans 16-187 (AIEQCSHYLV…IAVGLKLPKT (172 aa)). Arg163 is a catalytic residue. Catalysis depends on Ser233, which acts as the Proton donor. Glu328 is a catalytic residue.

The protein belongs to the MurB family. FAD is required as a cofactor.

The protein resides in the cytoplasm. It catalyses the reaction UDP-N-acetyl-alpha-D-muramate + NADP(+) = UDP-N-acetyl-3-O-(1-carboxyvinyl)-alpha-D-glucosamine + NADPH + H(+). It functions in the pathway cell wall biogenesis; peptidoglycan biosynthesis. Cell wall formation. The chain is UDP-N-acetylenolpyruvoylglucosamine reductase from Vibrio vulnificus (strain YJ016).